We begin with the raw amino-acid sequence, 201 residues long: Single-stranded DNA-binding protein, mitochondrial (201 aa).

In terms of domain architecture, SSB spans 71–184 (VHRAIICGKV…RDGKIRMIKY (114 aa)).

Its subcellular location is the mitochondrion. Its function is as follows. Binds to ss-DNA. This chain is Single-stranded DNA-binding protein, mitochondrial, found in Arabidopsis thaliana (Mouse-ear cress).